The following is a 225-amino-acid chain: MSSLHKFKAYFGMVPLDDYEDEYLDEPEPTRRPARPARDSGRDPYHDRDDRDFAEPAFSKAAYAPGRRDDLDDDFDRYESPRHSSRVEPVAVRSARPSASGAVRGSTRGALAVDTRSDRVESRRGPLFDEGGPLSKITTLRPRDYGEARTIGERFRDGTPVIMDLVEMSNADAKRLVDFAAGLAFALRGSFDKVATKVFLLSPADIDVSAEERRRIAETGFYSQK.

Positions D21–L134 are disordered. 3 stretches are compositionally biased toward basic and acidic residues: residues E28–A54, R77–R86, and T115–L127.

The protein belongs to the SepF family. As to quaternary structure, homodimer. Interacts with FtsZ.

The protein localises to the cytoplasm. Functionally, cell division protein that is part of the divisome complex and is recruited early to the Z-ring. Probably stimulates Z-ring formation, perhaps through the cross-linking of FtsZ protofilaments. Its function overlaps with FtsA. The sequence is that of Cell division protein SepF from Rhodococcus opacus (strain B4).